Here is a 518-residue protein sequence, read N- to C-terminus: Probable G-protein coupled receptor Mth-like 2 (518 aa).

Residues 1–26 (MIASSKMLLSASILIYFLLNLQSSSA) form the signal peptide. At 27-220 (EIADCSFYDT…CLILPSRTGQ (194 aa)) the chain is on the extracellular side. 5 cysteine pairs are disulfide-bonded: Cys31-Cys85, Cys87-Cys92, Cys96-Cys190, Cys97-Cys108, and Cys152-Cys211. An N-linked (GlcNAc...) asparagine glycan is attached at Asn47. 3 N-linked (GlcNAc...) asparagine glycosylation sites follow: Asn111, Asn125, and Asn201. Residues 221 to 241 (TVVMITSLICLVLTIAVYLCV) traverse the membrane as a helical segment. Residues 242–250 (KKLMNLEGK) lie on the Cytoplasmic side of the membrane. The helical transmembrane segment at 251-271 (CFICYMMCLFFGYLFLLLDLW) threads the bilayer. Over 272-279 (ELSLDFCK) the chain is Extracellular. A helical transmembrane segment spans residues 280–300 (AAGFLGYFFVMAAFFWLSIIS). The Cytoplasmic portion of the chain corresponds to 301 to 321 (RHYWKCLTNPCASMNIRSERA). Residues 322-342 (FLLYSCFAWAMPLALTGVTYL) form a helical membrane-spanning segment. The Extracellular portion of the chain corresponds to 343 to 371 (ADNVVNNEEWQPRVGDEGHCWIYTKSWSA). The chain crosses the membrane as a helical span at residues 372–392 (MVYFYGPMVLLILFNITMFVL). Over 393-426 (TAKHIIDSKRTLRKIARNEGRIQKLNSDKQNYTQ) the chain is Cytoplasmic. The helical transmembrane segment at 427 to 447 (FLLLFTVMGMSWSFEIFSYLV) threads the bilayer. Over 448-455 (QREKLWVN) the chain is Extracellular. The chain crosses the membrane as a helical span at residues 456-476 (IFLVADYFNWSQGVIIFVLFI). At 477–518 (LRRKTLVLFKKQIFPKQRAFSRSATQSTIESISQTKRHFNMT) the chain is on the cytoplasmic side.

It belongs to the G-protein coupled receptor 2 family. Mth subfamily.

The protein localises to the cell membrane. The chain is Probable G-protein coupled receptor Mth-like 2 (mthl2) from Drosophila melanogaster (Fruit fly).